The following is a 106-amino-acid chain: Iron-sulfur cluster assembly protein CyaY (106 aa).

The protein belongs to the frataxin family.

Involved in iron-sulfur (Fe-S) cluster assembly. May act as a regulator of Fe-S biogenesis. The sequence is that of Iron-sulfur cluster assembly protein CyaY from Escherichia coli O139:H28 (strain E24377A / ETEC).